The primary structure comprises 338 residues: Tagatose 1,6-diphosphate aldolase (338 aa).

It belongs to the aldolase LacD family.

The enzyme catalyses D-tagatofuranose 1,6-bisphosphate = D-glyceraldehyde 3-phosphate + dihydroxyacetone phosphate. Its pathway is carbohydrate metabolism; D-tagatose 6-phosphate degradation; D-glyceraldehyde 3-phosphate and glycerone phosphate from D-tagatose 6-phosphate: step 2/2. The chain is Tagatose 1,6-diphosphate aldolase from Listeria monocytogenes serotype 4b (strain CLIP80459).